The following is a 103-amino-acid chain: Large ribosomal subunit protein bL21 (103 aa).

It belongs to the bacterial ribosomal protein bL21 family. As to quaternary structure, part of the 50S ribosomal subunit. Contacts protein L20.

Functionally, this protein binds to 23S rRNA in the presence of protein L20. This Nitrosomonas europaea (strain ATCC 19718 / CIP 103999 / KCTC 2705 / NBRC 14298) protein is Large ribosomal subunit protein bL21.